Reading from the N-terminus, the 335-residue chain is Glyceraldehyde-3-phosphate dehydrogenase 2 (335 aa).

Residues 13–14 (RI), Asp-34, and Met-79 contribute to the NAD(+) site. Residues 151–153 (SCT), Thr-182, 211–212 (TG), and Arg-234 each bind D-glyceraldehyde 3-phosphate. The active-site Nucleophile is Cys-152. Asn-316 serves as a coordination point for NAD(+).

The protein belongs to the glyceraldehyde-3-phosphate dehydrogenase family. In terms of assembly, homotetramer.

The protein resides in the cytoplasm. It carries out the reaction D-glyceraldehyde 3-phosphate + phosphate + NAD(+) = (2R)-3-phospho-glyceroyl phosphate + NADH + H(+). The protein operates within carbohydrate degradation; glycolysis; pyruvate from D-glyceraldehyde 3-phosphate: step 1/5. In terms of biological role, glyceraldehyde-3-phosphate dehydrogenase is a key enzyme in glycolysis that catalyzes the first step of the pathway by converting D-glyceraldehyde 3-phosphate (G3P) into 3-phospho-D-glyceroyl phosphate. In Danio rerio (Zebrafish), this protein is Glyceraldehyde-3-phosphate dehydrogenase 2 (gapdh-2).